The sequence spans 500 residues: Na(+)/H(+) antiporter NhaB (500 aa).

12 consecutive transmembrane segments (helical) span residues 28–50, 68–88, 98–118, 121–141, 145–165, 205–225, 244–264, 311–331, 350–370, 394–414, 449–469, and 477–497; these read FLLLNPLLLWLAGPVTSAWVLVG, GGLLVLEALLLGLATPEALYA, LLLMFMVAGIYFMKDLLLLLF, LLLGVRSKALLSLLFCLLAAL, FLDALTVTAVVISVAVAFFAV, LLMHAAVGTALGGVCTLVGEP, QVAPVSMPVLAAGLLTCVLLE, VLIVGLALHVAEVGLIGLLVI, FQEALPFTALLVVFFAVVAVI, MLFIANGLLSAISDNVFVATI, VATPNGQAAFLFLLTSSIAPL, and MVWMALPYTLVMGGLGWWAVS.

This sequence belongs to the NhaB Na(+)/H(+) (TC 2.A.34) antiporter family.

Its subcellular location is the cell inner membrane. The catalysed reaction is 2 Na(+)(in) + 3 H(+)(out) = 2 Na(+)(out) + 3 H(+)(in). In terms of biological role, na(+)/H(+) antiporter that extrudes sodium in exchange for external protons. The polypeptide is Na(+)/H(+) antiporter NhaB (Pseudomonas aeruginosa (strain UCBPP-PA14)).